A 424-amino-acid polypeptide reads, in one-letter code: MSYVIDRRLNGKNKSTVNRQRFLRRYRDHIKKAVEEAVSRRSITDMEHGEQISIPGRDIDEPVLHHGRGGKQTIVHPGNKEFTAGERIPRPSGGGGGGSGSGKASNSGEGIDDFVFQITQEEFLDFMFEDLELPNLVKRHITGADTFKTVRAGISSEGNPSRINIVRTLRSAHARRIALSGNSRAKLREAKAELERLKIEEPDNFGDIQKLEAEITRLRMRIERVPYLDTFDLKYNLLVKQPNPSSKAVMFCLMDVSGSMTQATKDIAKRFFILLYLFLKRSYDKIDVVFIRHHTSAKEVDEEEFFYSRETGGTIVSSALKMMQEVMVERYPLNEWNIYAAQASDGDNWNDDSPICRDILIKQIMPFVQYYSYVEITPREHQALWYEYESVREAFPDSFAQQQIVSAADIYPVFRELFQRRLAT.

A disordered region spans residues 57–108 (RDIDEPVLHHGRGGKQTIVHPGNKEFTAGERIPRPSGGGGGGSGSGKASNSG). Gly residues predominate over residues 92-101 (SGGGGGGSGS).

This sequence belongs to the UPF0229 family.

The chain is UPF0229 protein Avin_46880 from Azotobacter vinelandii (strain DJ / ATCC BAA-1303).